A 147-amino-acid chain; its full sequence is Hemoglobin subunit epsilon (147 aa).

Residues 3–147 (HFTAEEKAAI…VAIALGHKYH (145 aa)) enclose the Globin domain. Ser-14 and Ser-51 each carry phosphoserine. Heme b-binding residues include His-64 and His-93.

This sequence belongs to the globin family. In terms of assembly, heterotetramer of two alpha chains and two epsilon chains in early embryonic hemoglobin Gower-2; two zeta chains and two epsilon chains in early embryonic hemoglobin Gower-1. Red blood cells.

In terms of biological role, the epsilon chain is a beta-type chain of early mammalian embryonic hemoglobin. This Pithecia irrorata (Gray monk saki) protein is Hemoglobin subunit epsilon (HBE1).